A 244-amino-acid polypeptide reads, in one-letter code: Pyridoxine 5'-phosphate synthase (244 aa).

Asn9 provides a ligand contact to 3-amino-2-oxopropyl phosphate. Residue 11 to 12 (DH) participates in 1-deoxy-D-xylulose 5-phosphate binding. Position 20 (Arg20) interacts with 3-amino-2-oxopropyl phosphate. His45 acts as the Proton acceptor in catalysis. 1-deoxy-D-xylulose 5-phosphate-binding residues include Arg47 and His52. The Proton acceptor role is filled by Glu72. 1-deoxy-D-xylulose 5-phosphate is bound at residue Thr102. Catalysis depends on His193, which acts as the Proton donor. Residues Gly194 and 215-216 (GH) contribute to the 3-amino-2-oxopropyl phosphate site.

It belongs to the PNP synthase family. Homooctamer; tetramer of dimers.

The protein resides in the cytoplasm. The catalysed reaction is 3-amino-2-oxopropyl phosphate + 1-deoxy-D-xylulose 5-phosphate = pyridoxine 5'-phosphate + phosphate + 2 H2O + H(+). Its pathway is cofactor biosynthesis; pyridoxine 5'-phosphate biosynthesis; pyridoxine 5'-phosphate from D-erythrose 4-phosphate: step 5/5. Functionally, catalyzes the complicated ring closure reaction between the two acyclic compounds 1-deoxy-D-xylulose-5-phosphate (DXP) and 3-amino-2-oxopropyl phosphate (1-amino-acetone-3-phosphate or AAP) to form pyridoxine 5'-phosphate (PNP) and inorganic phosphate. The chain is Pyridoxine 5'-phosphate synthase from Blochmanniella pennsylvanica (strain BPEN).